The following is a 254-amino-acid chain: Flavin-dependent thymidylate synthase (254 aa).

In terms of domain architecture, ThyX spans 7-237 (LRVQLIAKTE…PAVFADFEIT (231 aa)). DUMP-binding positions include 92–95 (ELIR), 103–107 (QLSQR), and His-176. Residues 95–97 (RHR) and Gln-103 contribute to the FAD site. The ThyX motif motif lies at 95–105 (RHRHFSYSQLS). Residues 192–194 (NYR) and His-198 each bind FAD. A dUMP-binding site is contributed by Arg-203. The Involved in ionization of N3 of dUMP, leading to its activation role is filled by Arg-203.

This sequence belongs to the thymidylate synthase ThyX family. Homotetramer. It depends on FAD as a cofactor.

It carries out the reaction dUMP + (6R)-5,10-methylene-5,6,7,8-tetrahydrofolate + NADPH + H(+) = dTMP + (6S)-5,6,7,8-tetrahydrofolate + NADP(+). It functions in the pathway pyrimidine metabolism; dTTP biosynthesis. Functionally, catalyzes the reductive methylation of 2'-deoxyuridine-5'-monophosphate (dUMP) to 2'-deoxythymidine-5'-monophosphate (dTMP) while utilizing 5,10-methylenetetrahydrofolate (mTHF) as the methyl donor, and NADPH and FADH(2) as the reductant. This Mycobacterium leprae (strain Br4923) protein is Flavin-dependent thymidylate synthase.